The chain runs to 644 residues: Heat shock protein SSC3, mitochondrial (644 aa).

Belongs to the heat shock protein 70 family.

It is found in the mitochondrion matrix. It localises to the mitochondrion nucleoid. Functionally, plays a role in facilitating the assembly of some protein complexes inside the mitochondria. It may initiate the events that lead to refolding of imported precursors in the matrix space. In Saccharomyces cerevisiae (strain ATCC 204508 / S288c) (Baker's yeast), this protein is Heat shock protein SSC3, mitochondrial (ECM10).